A 153-amino-acid polypeptide reads, in one-letter code: Ribosomal RNA large subunit methyltransferase H (153 aa).

S-adenosyl-L-methionine is bound by residues L70, G102, and 121–126 (LSSMTF).

This sequence belongs to the RNA methyltransferase RlmH family. In terms of assembly, homodimer.

It is found in the cytoplasm. The enzyme catalyses pseudouridine(1915) in 23S rRNA + S-adenosyl-L-methionine = N(3)-methylpseudouridine(1915) in 23S rRNA + S-adenosyl-L-homocysteine + H(+). In terms of biological role, specifically methylates the pseudouridine at position 1915 (m3Psi1915) in 23S rRNA. In Dictyoglomus thermophilum (strain ATCC 35947 / DSM 3960 / H-6-12), this protein is Ribosomal RNA large subunit methyltransferase H.